The sequence spans 389 residues: Geodin cluster transcriptional coactivator gedD (389 aa).

Positions 13–83 constitute an HTH iclR-type domain; that stretch reads LAWHVQLLAC…QPGQIMHTPL (71 aa). The H-T-H motif DNA-binding region spans 43–62; sequence VRDLAQLCGVSETTLSRVVR.

Its subcellular location is the nucleus. In terms of biological role, transcriptional coactivator; part of the gene cluster that mediates the biosynthesis of geodin, an intermediate in the biosynthesis of other natural products. With gedR, coregulates the production of geodin. This is Geodin cluster transcriptional coactivator gedD (gedD) from Aspergillus terreus (strain NIH 2624 / FGSC A1156).